A 463-amino-acid polypeptide reads, in one-letter code: Dopaminechrome tautomerase (463 aa).

This sequence belongs to the major royal jelly protein family.

Its subcellular location is the secreted. It catalyses the reaction dopaminechrome = 5,6-dihydroxyindole. Its pathway is pigment biosynthesis; melanin biosynthesis. Catalyzes the conversion of dopaminechrome to 5,6-dihydroxyindole in the eumelanin biosynthetic pathway originating from dopamine. Catalyzes tautomerization of dopaminechrome to 5,6-dihydroxyindole during eumelanin biosynthesis. Acts both dopaminechrome and N-methyl dopaminechrome but not on dopachrome or other aminochromes tested. This is Dopaminechrome tautomerase from Drosophila melanogaster (Fruit fly).